The following is a 637-amino-acid chain: tRNA uridine 5-carboxymethylaminomethyl modification enzyme MnmG (637 aa).

FAD-binding positions include 15–20, isoleucine 127, and serine 182; that span reads GAGHAG. Residue 276 to 290 participates in NAD(+) binding; that stretch reads GPRYCPSIEDKIVRF. Glutamine 373 is an FAD binding site.

The protein belongs to the MnmG family. Homodimer. Heterotetramer of two MnmE and two MnmG subunits. FAD serves as cofactor.

Its subcellular location is the cytoplasm. In terms of biological role, NAD-binding protein involved in the addition of a carboxymethylaminomethyl (cmnm) group at the wobble position (U34) of certain tRNAs, forming tRNA-cmnm(5)s(2)U34. The polypeptide is tRNA uridine 5-carboxymethylaminomethyl modification enzyme MnmG (Streptococcus pneumoniae (strain ATCC BAA-255 / R6)).